A 185-amino-acid chain; its full sequence is Ribosome-recycling factor (185 aa).

It belongs to the RRF family.

Its subcellular location is the cytoplasm. Its function is as follows. Responsible for the release of ribosomes from messenger RNA at the termination of protein biosynthesis. May increase the efficiency of translation by recycling ribosomes from one round of translation to another. The polypeptide is Ribosome-recycling factor (Pseudomonas syringae pv. tomato (strain ATCC BAA-871 / DC3000)).